The sequence spans 631 residues: PTS system glucosamine-specific EIICBA component (631 aa).

The PTS EIIC type-1 domain occupies 3–382; that stretch reads KKAFQILQQL…WNLKTPGRET (380 aa). 8 helical membrane-spanning segments follow: residues 12–32, 56–76, 106–126, 149–169, 196–216, 243–263, 298–318, and 350–370; these read LGRA…LLRF, LIFA…AGLA, HLID…AYLY, IITS…WPLI, LLIP…MMGE, FMMG…LAII, FLFV…VIFV, and VVIP…RFAI. A PTS EIIB type-1 domain is found at 397–478; that stretch reads DQLAFHVLQA…KTIMAGGVPA (82 aa). The active-site Phosphocysteine intermediate; for EIIB activity is the Cys419. Cys419 is modified (phosphocysteine). The 105-residue stretch at 515-619 folds into the PTS EIIA type-1 domain; it reads DQVFSEKMMG…SAITPVIFTN (105 aa). His567 acts as the Tele-phosphohistidine intermediate; for EIIA activity in catalysis. Position 567 is a phosphohistidine (His567).

The protein resides in the cell membrane. It catalyses the reaction D-glucosamine(out) + N(pros)-phospho-L-histidyl-[protein] = D-glucosamine 6-phosphate(in) + L-histidyl-[protein]. The phosphoenolpyruvate-dependent sugar phosphotransferase system (sugar PTS), a major carbohydrate active transport system, catalyzes the phosphorylation of incoming sugar substrates concomitantly with their translocation across the cell membrane. This system is involved in glucosamine transport. In vitro, when expressed in the absence of GamR and NagP, can transport N-acetylglucosamine. In terms of biological role, in addition, plays an important role in the phosphorylation of EIIA-deficient PTS transporters. The EIIA domain can transfer a phosphoryl group to EIIA-deficient PTS transporters, enabling growth with maltose, N-acetylglucosamine, sucrose or trehalose as the sole carbon source. In Bacillus subtilis (strain 168), this protein is PTS system glucosamine-specific EIICBA component.